Consider the following 89-residue polypeptide: Putative membrane protein insertion efficiency factor (89 aa).

Residues 68 to 89 (VPPPNSDARNAPHEAEASSHRL) form a disordered region. Over residues 77-89 (NAPHEAEASSHRL) the composition is skewed to basic and acidic residues.

It belongs to the UPF0161 family.

It localises to the cell inner membrane. Its function is as follows. Could be involved in insertion of integral membrane proteins into the membrane. The protein is Putative membrane protein insertion efficiency factor of Burkholderia thailandensis (strain ATCC 700388 / DSM 13276 / CCUG 48851 / CIP 106301 / E264).